Reading from the N-terminus, the 154-residue chain is Transcriptional repressor NrdR (154 aa).

Residues cysteine 3–cysteine 34 fold into a zinc finger. An ATP-cone domain is found at leucine 46–aspartate 136.

The protein belongs to the NrdR family. Zn(2+) is required as a cofactor.

Negatively regulates transcription of bacterial ribonucleotide reductase nrd genes and operons by binding to NrdR-boxes. This is Transcriptional repressor NrdR from Mycolicibacterium gilvum (strain PYR-GCK) (Mycobacterium gilvum (strain PYR-GCK)).